Reading from the N-terminus, the 1020-residue chain is Sodium/potassium-transporting ATPase subunit alpha-2 (1020 aa).

The propeptide occupies 1–5; that stretch reads MGRGA. Residues 1–31 form a disordered region; that stretch reads MGRGAGREYSPAATTAENGGGKKKQKEKELD. Residues 6-85 lie on the Cytoplasmic side of the membrane; that stretch reads GREYSPAATT…NALTPPPTTP (80 aa). Position 10 is a phosphoserine (Ser10). An interaction with phosphoinositide-3 kinase region spans residues 80–82; sequence PPP. The helical transmembrane segment at 86–106 threads the bilayer; the sequence is EWVKFCRQLFGGFSILLWIGA. Residues 107–129 are Extracellular-facing; that stretch reads ILCFLAYGIQAAMEDEPSNDNLY. The chain crosses the membrane as a helical span at residues 130-150; it reads LGVVLAAVVIVTGCFSYYQEA. At 151-286 the chain is on the cytoplasmic side; sequence KSSKIMDSFK…VGRTPIAMEI (136 aa). The span at 212 to 227 shows a compositional bias: polar residues; it reads DNSSLTGESEPQTRSP. The disordered stretch occupies residues 212-231; that stretch reads DNSSLTGESEPQTRSPEFTH. Residues 287-306 form a helical membrane-spanning segment; it reads EHFIQLITGVAVFLGVSFFV. The Extracellular portion of the chain corresponds to 307 to 318; sequence LSLILGYSWLEA. The helical transmembrane segment at 319–336 threads the bilayer; sequence VIFLIGIIVANVPEGLLA. Residues 337-769 are Cytoplasmic-facing; it reads TVTVCLTLTA…EEGRLIFDNL (433 aa). Asp374 acts as the 4-aspartylphosphate intermediate in catalysis. Phosphoserine is present on residues Ser439, Ser450, Ser496, and Ser559. Thr570 is subject to Phosphothreonine. Phosphoserine is present on residues Ser587 and Ser672. Residues Asp714 and Asp718 each coordinate Mg(2+). Residues 770-789 traverse the membrane as a helical segment; it reads KKSIAYTLTSNIPEITPFLL. Over 790–799 the chain is Extracellular; sequence FIIANIPLPL. A helical transmembrane segment spans residues 800–820; the sequence is GTVTILCIDLGTDMVPAISLA. The Cytoplasmic segment spans residues 821–840; sequence YEAAESDIMKRQPRNSQTDK. Ser826 bears the Phosphoserine mark. A helical membrane pass occupies residues 841-863; that stretch reads LVNERLISMAYGQIGMIQALGGF. Topologically, residues 864 to 915 are extracellular; the sequence is FTYFVILAENGFLPSRLLGIRLDWDDRTMNDLEDSYGQEWTYEQRKVVEFTC. A helical transmembrane segment spans residues 916-935; that stretch reads HTAFFASIVVVQWADLIICK. The Cytoplasmic segment spans residues 936 to 948; the sequence is TRRNSVFQQGMKN. Ser940 bears the Phosphoserine; by PKA mark. Residues 949–967 form a helical membrane-spanning segment; the sequence is KILIFGLLEETALAAFLSY. Residues 968 to 982 lie on the Extracellular side of the membrane; that stretch reads CPGMGVALRMYPLKV. The helical transmembrane segment at 983-1003 threads the bilayer; the sequence is TWWFCAFPYSLLIFIYDEVRK. At 1004–1020 the chain is on the cytoplasmic side; it reads LILRRYPGGWVEKETYY.

The protein belongs to the cation transport ATPase (P-type) (TC 3.A.3) family. Type IIC subfamily. As to quaternary structure, the sodium/potassium-transporting ATPase is composed of a catalytic alpha subunit, an auxiliary non-catalytic beta subunit and an additional regulatory subunit. Interacts with regulatory subunit FXYD1.

It localises to the membrane. The protein localises to the cell membrane. It catalyses the reaction K(+)(out) + Na(+)(in) + ATP + H2O = K(+)(in) + Na(+)(out) + ADP + phosphate + H(+). This is the catalytic component of the active enzyme, which catalyzes the hydrolysis of ATP coupled with the exchange of sodium and potassium ions across the plasma membrane. This action creates the electrochemical gradient of sodium and potassium, providing the energy for active transport of various nutrients. The polypeptide is Sodium/potassium-transporting ATPase subunit alpha-2 (ATP1A2) (Homo sapiens (Human)).